The sequence spans 101 residues: Small ribosomal subunit protein uS10 (101 aa).

Belongs to the universal ribosomal protein uS10 family. In terms of assembly, part of the 30S ribosomal subunit.

Involved in the binding of tRNA to the ribosomes. The sequence is that of Small ribosomal subunit protein uS10 from Mycobacterium avium (strain 104).